The primary structure comprises 267 residues: NAD kinase (267 aa).

Catalysis depends on D45, which acts as the Proton acceptor. NAD(+) is bound by residues 45–46, 123–124, R149, D151, A186, and N226; these read DG and NE.

It belongs to the NAD kinase family. A divalent metal cation is required as a cofactor.

The protein localises to the cytoplasm. The catalysed reaction is NAD(+) + ATP = ADP + NADP(+) + H(+). Functionally, involved in the regulation of the intracellular balance of NAD and NADP, and is a key enzyme in the biosynthesis of NADP. Catalyzes specifically the phosphorylation on 2'-hydroxyl of the adenosine moiety of NAD to yield NADP. This chain is NAD kinase, found in Shouchella clausii (strain KSM-K16) (Alkalihalobacillus clausii).